Here is a 59-residue protein sequence, read N- to C-terminus: Small, acid-soluble spore protein C1 (59 aa).

Belongs to the alpha/beta-type SASP family. In terms of processing, SASP are degraded in the first minutes of spore germination and provide amino acids for both new protein synthesis and metabolism.

Its function is as follows. SASP are bound to spore DNA. They are double-stranded DNA-binding proteins that cause DNA to change to an a-like conformation. They protect the DNA backbone from chemical and enzymatic cleavage and are thus involved in dormant spore's high resistance to UV light. The chain is Small, acid-soluble spore protein C1 (sspC1) from Clostridium perfringens (strain 13 / Type A).